Consider the following 88-residue polypeptide: Small ribosomal subunit protein uS15 (88 aa).

It belongs to the universal ribosomal protein uS15 family. Part of the 30S ribosomal subunit. Forms a bridge to the 50S subunit in the 70S ribosome, contacting the 23S rRNA.

One of the primary rRNA binding proteins, it binds directly to 16S rRNA where it helps nucleate assembly of the platform of the 30S subunit by binding and bridging several RNA helices of the 16S rRNA. Its function is as follows. Forms an intersubunit bridge (bridge B4) with the 23S rRNA of the 50S subunit in the ribosome. The sequence is that of Small ribosomal subunit protein uS15 from Verminephrobacter eiseniae (strain EF01-2).